Reading from the N-terminus, the 527-residue chain is tRNA pseudouridine synthase Pus10 (527 aa).

2 residues coordinate Zn(2+): cysteine 21 and cysteine 24. Residues 42-87 (KELLNELQKFLEPEKPELILEAPNPPLKKIRLHEDGIDNLSEDGKE) are a coiled coil. A Phosphoserine modification is found at serine 82. The Zn(2+) site is built by cysteine 107 and cysteine 110. The segment at 302-315 (TPWIIDGERKMESS) is RNA binding forefinger loop. The active-site Nucleophile is aspartate 342. Residues 440–455 (QKTPLRVLHRRPLAVR) are RNA binding thumb loop.

Belongs to the pseudouridine synthase Pus10 family. Interacts with components of the microprocessor complex DROSHA and DGCR8. In terms of processing, proteolytically cleaved during TRAIL-induced cell death. Cleaved, in vitro, either by caspase-3 (CASP3) or caspase-8 (CASP8).

The protein resides in the nucleus. The protein localises to the cytoplasm. It is found in the mitochondrion. The catalysed reaction is uridine(55) in tRNA = pseudouridine(55) in tRNA. It carries out the reaction uridine(54) in tRNA = pseudouridine(54) in tRNA. In terms of biological role, protein with different functions depending on its subcellular location: involved in miRNA processing in the nucleus and acts as a tRNA pseudouridylate synthase in the cytoplasm. In the cytoplasm, acts as a pseudouridylate synthase by catalyzing synthesis of pseudouridine(54) and pseudouridine(55) from uracil-54 and uracil-55, respectively, in the psi GC loop of a subset of tRNAs. tRNA pseudouridylate synthase activity is enhanced by the presence of 1-methyladenosine at position 53-61 of tRNAs. Does not show tRNA pseudouridylate synthase activity in the nucleus. In the nucleus, promotes primary microRNAs (pri-miRNAs) processing independently of its RNA pseudouridylate synthase activity. Binds pri-miRNAs. Modulator of TRAIL/TNFSF10-induced cell death via activation of procaspase-8 and BID cleavage. Required for the progression of the apoptotic signal through intrinsic mitochondrial cell death. In Mus musculus (Mouse), this protein is tRNA pseudouridine synthase Pus10.